The primary structure comprises 477 residues: Stromelysin-1 (477 aa).

Positions 1–17 (MKSLPILLLLCVAVCSA) are cleaved as a signal peptide. A propeptide spans 18-99 (YPLDGAARGE…PRCGVPDVGH (82 aa)) (activation peptide). The short motif at 90 to 97 (PRCGVPDV) is the Cysteine switch element. Residue C92 coordinates Zn(2+). The Ca(2+) site is built by D124 and D158. Zn(2+) is bound by residues H168 and D170. Ca(2+) is bound by residues D175, G176, G178, and V180. Residue H183 participates in Zn(2+) binding. G190, N192, and D194 together coordinate Ca(2+). H196 serves as a coordination point for Zn(2+). 3 residues coordinate Ca(2+): D198, D199, and E201. Residue H218 coordinates Zn(2+). E219 is a catalytic residue. Residues H222 and H228 each coordinate Zn(2+). Residues 262 to 287 (LYGPPPDSPETPLVPTEPVPPEPGTP) form a disordered region. Pro residues predominate over residues 276-285 (PTEPVPPEPG). Hemopexin repeat units follow at residues 287–336 (PANC…WPSL), 337–383 (PSGV…GFPP), 385–433 (VRKI…FPGI), and 434–477 (DSKI…WLNC). A disulfide bridge links C290 with C477. D297 contributes to the Ca(2+) binding site. Positions 389 and 438 each coordinate Ca(2+).

Belongs to the peptidase M10A family. It depends on Ca(2+) as a cofactor. Requires Zn(2+) as cofactor. Directly cleaved by HTRA2 to produce active form.

Its subcellular location is the secreted. The protein localises to the extracellular space. It localises to the extracellular matrix. It is found in the nucleus. The protein resides in the cytoplasm. It catalyses the reaction Preferential cleavage where P1', P2' and P3' are hydrophobic residues.. Enzymatic activity is activated by HTRA2 in dopaminergic cells upon mitochondrial stress. Metalloproteinase with a rather broad substrate specificity that can degrade fibronectin, laminin, gelatins of type I, III, IV, and V; collagens III, IV, X, and IX, and cartilage proteoglycans. Activates different molecules including growth factors, plasminogen or other matrix metalloproteinases such as MMP9. Once released into the extracellular matrix (ECM), the inactive pro-enzyme is activated by the plasmin cascade signaling pathway. Also acts intracellularly. For example, in dopaminergic neurons, gets activated by the serine protease HTRA2 upon stress and plays a pivotal role in DA neuronal degeneration by mediating microglial activation and alpha-synuclein/SNCA cleavage. In addition, plays a role in immune response and possesses antiviral activity against various viruses such as vesicular stomatitis virus, influenza A virus (H1N1) and human herpes virus 1. Mechanistically, translocates from the cytoplasm into the cell nucleus upon virus infection to influence NF-kappa-B activities. The chain is Stromelysin-1 (MMP3) from Homo sapiens (Human).